A 1194-amino-acid polypeptide reads, in one-letter code: Peroxisomal ATPase PEX1 (1194 aa).

The interval 220–255 (KTRQRRMSHQGKSVKAKSLASTRHGKRRDDGSGPSG) is disordered. Basic residues predominate over residues 221–234 (TRQRRMSHQGKSVK). The interval 538 to 730 (RSASVLLTGA…GPEPTLKIEK (193 aa)) is AAA-cassette D1. Residues 546–553 (GARGSGKT) and 849–856 (GYPGCGKT) contribute to the ATP site. The AAA-cassette D2 stretch occupies residues 844-1028 (GLLLYGYPGC…LYNAHLEAIH (185 aa)). Disordered stretches follow at residues 1062-1084 (YISFSMGNKDSTGEPSTQPLTNG), 1116-1139 (QVQQQQSQTNQAQEEEKGDDEPVI), and 1174-1194 (RSGEMPSGQSSTEIGGRSSLM). A compositionally biased stretch (polar residues) spans 1066–1084 (SMGNKDSTGEPSTQPLTNG). Over residues 1116-1127 (QVQQQQSQTNQA) the composition is skewed to low complexity.

It belongs to the AAA ATPase family. In terms of assembly, interacts with PEX6; forming the PEX1-PEX6 AAA ATPase complex, which is composed of a heterohexamer formed by a trimer of PEX1-PEX6 dimers.

It is found in the cytoplasm. The protein resides in the cytosol. It localises to the peroxisome membrane. It carries out the reaction ATP + H2O = ADP + phosphate + H(+). In terms of biological role, component of the PEX1-PEX6 AAA ATPase complex, a protein dislocase complex that mediates the ATP-dependent extraction of the PEX5 receptor from peroxisomal membranes, an essential step for PEX5 recycling. Specifically recognizes PEX5 monoubiquitinated at 'Cys-6', and pulls it out of the peroxisome lumen through the PEX2-PEX10-PEX12 retrotranslocation channel. Extraction by the PEX1-PEX6 AAA ATPase complex is accompanied by unfolding of the TPR repeats and release of bound cargo from PEX5. Regulates autophagy and biogenesis of peroxisomes and Woronin bodies. Plays important roles in mycelial growth and development and stress response. Is also essential for conidiation and fatty acid utilization. Required for nematode predation via trap formation. In Arthrobotrys oligospora (strain ATCC 24927 / CBS 115.81 / DSM 1491) (Nematode-trapping fungus), this protein is Peroxisomal ATPase PEX1.